The chain runs to 460 residues: GTPase Der (460 aa).

2 consecutive EngA-type G domains span residues 21–187 (PRVV…FSVD) and 198–373 (VRLA…AQLN). Residues 27 to 34 (GRPNVGKS), 74 to 78 (DTSGF), 141 to 144 (NKTE), 204 to 211 (GKPNTGKS), 251 to 255 (DTAGI), and 316 to 319 (NKWD) contribute to the GTP site. In terms of domain architecture, KH-like spans 374 to 457 (TKVETSALNT…PVKLTIRKNC (84 aa)).

This sequence belongs to the TRAFAC class TrmE-Era-EngA-EngB-Septin-like GTPase superfamily. EngA (Der) GTPase family. As to quaternary structure, associates with the 50S ribosomal subunit.

GTPase that plays an essential role in the late steps of ribosome biogenesis. The chain is GTPase Der from Treponema pallidum subsp. pallidum (strain SS14).